A 233-amino-acid polypeptide reads, in one-letter code: GSK-3-binding protein FRAT2 (233 aa).

The tract at residues M1 to S24 is disordered. Acidic residues predominate over residues E7–S24. The tract at residues D174–L196 is involved in GSK-3 binding. Residues A204–L233 form a disordered region.

The protein belongs to the GSK-3-binding protein family. As to quaternary structure, binds GSK-3 and prevents GSK-3-dependent phosphorylation.

Positively regulates the Wnt signaling pathway by stabilizing beta-catenin through the association with GSK-3. In Homo sapiens (Human), this protein is GSK-3-binding protein FRAT2 (FRAT2).